Here is a 208-residue protein sequence, read N- to C-terminus: High frequency lysogenization protein HflD homolog (208 aa).

Belongs to the HflD family.

It localises to the cytoplasm. Its subcellular location is the cell inner membrane. In Edwardsiella ictaluri (strain 93-146), this protein is High frequency lysogenization protein HflD homolog.